The primary structure comprises 442 residues: D-serine dehydratase 1 (442 aa).

An N6-(pyridoxal phosphate)lysine modification is found at Lys118.

Belongs to the serine/threonine dehydratase family. DsdA subfamily. As to quaternary structure, monomer. Pyridoxal 5'-phosphate is required as a cofactor.

The catalysed reaction is D-serine = pyruvate + NH4(+). This is D-serine dehydratase 1 from Escherichia coli O6:K15:H31 (strain 536 / UPEC).